We begin with the raw amino-acid sequence, 244 residues long: uncharacterized protein (244 aa).

6 helical membrane passes run 5–27 (KFALLFTFAACFAVIVFFWLLAV), 37–59 (IVMVLLISPIFAILLAFNLSRFL), 87–106 (LVFIHLMPIAFLGALIFYYG), 116–138 (LSLFALIFALSPLLFLGISFFVA), 159–181 (FWIWIHLFVILLIIISKVLVQPS), and 196–218 (GVFNLLIIATMNAIFGVTGRMVA).

The protein localises to the cell membrane. This is an uncharacterized protein from Archaeoglobus fulgidus (strain ATCC 49558 / DSM 4304 / JCM 9628 / NBRC 100126 / VC-16).